The sequence spans 92 residues: Small ribosomal subunit protein uS19 (92 aa).

This sequence belongs to the universal ribosomal protein uS19 family.

Functionally, protein S19 forms a complex with S13 that binds strongly to the 16S ribosomal RNA. The sequence is that of Small ribosomal subunit protein uS19 from Rhizobium johnstonii (strain DSM 114642 / LMG 32736 / 3841) (Rhizobium leguminosarum bv. viciae).